A 157-amino-acid polypeptide reads, in one-letter code: SsrA-binding protein (157 aa).

The protein belongs to the SmpB family.

Its subcellular location is the cytoplasm. Required for rescue of stalled ribosomes mediated by trans-translation. Binds to transfer-messenger RNA (tmRNA), required for stable association of tmRNA with ribosomes. tmRNA and SmpB together mimic tRNA shape, replacing the anticodon stem-loop with SmpB. tmRNA is encoded by the ssrA gene; the 2 termini fold to resemble tRNA(Ala) and it encodes a 'tag peptide', a short internal open reading frame. During trans-translation Ala-aminoacylated tmRNA acts like a tRNA, entering the A-site of stalled ribosomes, displacing the stalled mRNA. The ribosome then switches to translate the ORF on the tmRNA; the nascent peptide is terminated with the 'tag peptide' encoded by the tmRNA and targeted for degradation. The ribosome is freed to recommence translation, which seems to be the essential function of trans-translation. The protein is SsrA-binding protein of Chlorobium chlorochromatii (strain CaD3).